Here is a 976-residue protein sequence, read N- to C-terminus: Collagen alpha-1(I) chain (976 aa).

Position 1 is a phosphoserine (S1). The disordered stretch occupies residues 1–976 (SAGGISVPGP…PGPPGPPGPP (976 aa)). 4-hydroxyproline is present on residues P20, P23, P26, P35, P38, P41, P55, P70, P76, P85, and P91. Over residues 58–72 (NGDDGEAGKPGRPGE) the composition is skewed to basic and acidic residues. Position 94 is a 5-hydroxylysine; alternate (K94). A glycan (O-linked (Gal...) hydroxylysine; alternate) is linked at K94. S100 bears the Phosphoserine mark. Composition is skewed to low complexity over residues 108 to 118 (DAGPAGPKGAP) and 132 to 150 (PGASGPAGARGNDGATGAA). Residues P118, P132, P153, P162, P165, P192, P195, P207, P213, P222, P228, P231, and P246 each carry the 4-hydroxyproline modification. Pro residues predominate over residues 152–164 (PPGPTGPAGPPGF). Low complexity predominate over residues 198–237 (AGAAGPAGNPGADGQPGAKGANGAPGIAGAPGFPGARGPS). K249 is modified (5-hydroxylysine). 4-hydroxyproline is present on residues P255, P258, P266, P275, P290, P296, P304, and P310. Residues 294 to 308 (GLPGPGERGGPGSRG) show a composition bias toward gly residues. K319 carries the 5-hydroxylysine modification. P328, P337, P343, P349, P358, P361, P370, P379, P385, P397, P406, P415, P418, P436, P453, P459, P465, P471, P477, P483, P495, P504, P517, P523, and P532 each carry 4-hydroxyproline. A compositionally biased stretch (low complexity) spans 352 to 378 (KGLTGSPGSPGPDGKTGPPGPAGQDGR). A compositionally biased stretch (low complexity) spans 387 to 406 (ARGQAGVMGFPGPKGAAGEP). Over residues 465-474 (PGEAGKPGEQ) the composition is skewed to low complexity. Position 544 is a 5-hydroxylysine (K544). 4-hydroxyproline occurs at positions 550, 565, and 571. Residues 577–591 (SGPSGPAGPTGARGA) are compositionally biased toward low complexity. S580 carries the post-translational modification Phosphoserine. 8 positions are modified to 4-hydroxyproline: P592, P598, P601, P610, P616, P634, P643, and P652. Positions 604-631 (AGFAGPPGADGQPGAKGEPGDAGAKGDA) are enriched in low complexity. Position 655 is a 5-hydroxylysine (K655). Residues 660–676 (SAGPPGATGFPGAAGRV) show a composition bias toward low complexity. 2 positions are modified to 4-hydroxyproline: P664 and P670. Residue P678 is modified to 3-hydroxyproline. P679, P688, P691, P718, P726, P735, P753, P762, P765, P771, P786, P792, P798, P806, and P812 each carry 4-hydroxyproline. Residues 723-735 (KGSPGADGPAGAP) show a composition bias toward low complexity. Residues 785–795 (PPGPMGPPGLA) show a composition bias toward pro residues. K821 is modified (5-hydroxylysine). Residues 829 to 844 (PGPPGAPGAPGAPGPV) are compositionally biased toward pro residues. 4-hydroxyproline is present on residues P832, P835, and P838. Low complexity predominate over residues 864–878 (AGPAGARGPAGPQGP). Residues 879–893 (RGDKGETGEQGDRGI) show a composition bias toward basic and acidic residues. K882 is subject to 5-hydroxylysine. Residue K894 is modified to 5-hydroxylysine; alternate. K894 is a glycosylation site (O-linked (Gal...) hydroxylysine; alternate). 4 positions are modified to 4-hydroxyproline: P907, P910, P928, and P943. Residues 910 to 943 (PGEQGPSGASGPAGPRGPPGSAGSPGKDGLNGLP) show a composition bias toward low complexity. P948 is modified (3-hydroxyproline). P949 carries the 4-hydroxyproline modification. Residues 961 to 976 (VGPPGPPGPPGPPGPP) are compositionally biased toward pro residues. P963 bears the 3-hydroxyproline mark. P964 bears the 4-hydroxyproline mark. Position 966 is a 3-hydroxyproline (P966). 4-hydroxyproline is present on P967. P969 carries the post-translational modification 3-hydroxyproline. 3 positions are modified to 4-hydroxyproline: P970, P973, and P976.

This sequence belongs to the fibrillar collagen family. As to quaternary structure, trimers of one alpha 2(I) and two alpha 1(I) chains. Post-translationally, contains mostly 4-hydroxyproline. Proline residues at the third position of the tripeptide repeating unit (G-X-Y) are hydroxylated in some or all of the chains. In terms of processing, contains 3-hydroxyproline at a few sites. This modification occurs on the first proline residue in the sequence motif Gly-Pro-Hyp, where Hyp is 4-hydroxyproline. Lysine residues at the third position of the tripeptide repeating unit (G-X-Y) are 5-hydroxylated in some or all of the chains. Post-translationally, O-glycosylated on hydroxylated lysine residues. The O-linked glycan consists of a Glc-Gal disaccharide. As to expression, expressed in bones.

The protein localises to the secreted. It localises to the extracellular space. It is found in the extracellular matrix. Functionally, type I collagen is a member of group I collagen (fibrillar forming collagen). The chain is Collagen alpha-1(I) chain from Acratocnus ye (Hispaniolan ground sloth).